Reading from the N-terminus, the 426-residue chain is Glutamate-1-semialdehyde 2,1-aminomutase (426 aa).

Lys-265 carries the post-translational modification N6-(pyridoxal phosphate)lysine.

Belongs to the class-III pyridoxal-phosphate-dependent aminotransferase family. HemL subfamily. Homodimer. It depends on pyridoxal 5'-phosphate as a cofactor.

The protein resides in the cytoplasm. It catalyses the reaction (S)-4-amino-5-oxopentanoate = 5-aminolevulinate. The protein operates within porphyrin-containing compound metabolism; protoporphyrin-IX biosynthesis; 5-aminolevulinate from L-glutamyl-tRNA(Glu): step 2/2. The polypeptide is Glutamate-1-semialdehyde 2,1-aminomutase (Escherichia coli O139:H28 (strain E24377A / ETEC)).